We begin with the raw amino-acid sequence, 791 residues long: uncharacterized protein (791 aa).

Positions 267 to 288 (APGESSAQSSYEQSTRAGDSAP) are disordered. Residues 271–283 (SSAQSSYEQSTRA) show a composition bias toward polar residues.

This is an uncharacterized protein from Treponema pallidum (strain Nichols).